The chain runs to 105 residues: Photosystem II 5 kDa protein, chloroplastic (105 aa).

The transit peptide at 1-77 directs the protein to the chloroplast; it reads MASITMTTSF…ICSVAGVATA (77 aa).

Post-translationally, the maturation of the PSII-T precursor to its final form occurs through a two step process. First, a stromal intermediate is formed, which, upon translocation into the thylakoid membrane, is processed to the mature protein.

It localises to the plastid. The protein localises to the chloroplast thylakoid membrane. May be a component of the oxygen-evolving complex. The protein is Photosystem II 5 kDa protein, chloroplastic (PSBT) of Gossypium hirsutum (Upland cotton).